The chain runs to 689 residues: Glycine--tRNA ligase beta subunit (689 aa).

This sequence belongs to the class-II aminoacyl-tRNA synthetase family. As to quaternary structure, tetramer of two alpha and two beta subunits.

The protein localises to the cytoplasm. It catalyses the reaction tRNA(Gly) + glycine + ATP = glycyl-tRNA(Gly) + AMP + diphosphate. The chain is Glycine--tRNA ligase beta subunit (glyS) from Coxiella burnetii (strain RSA 493 / Nine Mile phase I).